A 283-amino-acid chain; its full sequence is Coiled-coil domain-containing protein 107 (283 aa).

An N-terminal signal peptide occupies residues 1-24; that stretch reads MAGAVSLLGVVGLLLVSALSGVLG. Positions 30 to 62 are disordered; that stretch reads DLRAHPGNAAHPGSGATEPRRRPPLKDQRERTR. Basic and acidic residues predominate over residues 47–62; the sequence is EPRRRPPLKDQRERTR. Residues 65-85 form a helical membrane-spanning segment; it reads SLPLGALYTAAVAAFVLYKCL. Positions 104–134 form a coiled coil; it reads LQSEQQLAQLTQQLAQTEQHLNNLMAQLDPL. 2 disordered regions span residues 164 to 207 and 258 to 283; these read KPDK…SRPL and AKGPSHSLGWEGGTTAEGRLKQSLFS. Positions 176–187 are enriched in gly residues; it reads EGSGGESAGGGD.

The protein resides in the membrane. The chain is Coiled-coil domain-containing protein 107 (CCDC107) from Homo sapiens (Human).